A 650-amino-acid polypeptide reads, in one-letter code: MICOS complex subunit MIC60, mitochondrial (650 aa).

Residues 1-34 (MLRKSVLELSSRLSIKRFPRNLGAQRFHLSSSRN) constitute a mitochondrion transit peptide. Residues 26-74 (RFHLSSSRNASTSGKNGLPGAKPVGKPDASKVDPPKVTPPPPTKGNSSK) are disordered. Polar residues predominate over residues 28-40 (HLSSSRNASTSGK). Residues 35 to 74 (ASTSGKNGLPGAKPVGKPDASKVDPPKVTPPPPTKGNSSK) lie on the Mitochondrial matrix side of the membrane. The chain crosses the membrane as a helical span at residues 75 to 95 (VVIGGVAIAGAFLVAYQTGYL). Topologically, residues 96–549 (DQYLGKEQQK…FDTLKGTLRH (454 aa)) are mitochondrial intermembrane. 3 disordered regions span residues 121 to 168 (EAHH…ESDL), 239 to 267 (QSSS…EDGI), and 284 to 304 (EGSD…TKET). The segment covering 284–299 (EGSDTESTGSSSIGEQ) has biased composition (low complexity). 2 coiled-coil regions span residues 345-369 (AQVF…LRAR) and 396-430 (KAIQ…LAKA). The helical transmembrane segment at 550 to 570 (FSLIPPGGGGILAHSLAHVAS) threads the bilayer. Over 571–650 (SLKFKEVDQA…QSYATCVSLT (80 aa)) the chain is Mitochondrial matrix.

Belongs to the MICOS complex subunit Mic60 family. In terms of assembly, component of the mitochondrial contact site and cristae organizing system (MICOS) complex. The MICOS complex associates with mitochondrial outer membrane proteins. Present in a large lipid-enriched complex called mitochondrial transmembrane lipoprotein (MTL) complex made of proteins located in the two mitochondrial membranes, including the TOM complex and the core components of the MICOS complex and containing at least digalactosyldiacylglycerol (DGDG). Binds to TOM40-1. Component of a mitochondrial large protein complex that contains, at least, MIC60, DGS1, TOM40, TOM20 proteins, and petC/RISP.

The protein resides in the mitochondrion inner membrane. Functionally, component of the MICOS complex, a large protein complex of the mitochondrial inner membrane that plays crucial roles in the maintenance of crista junctions, inner membrane architecture, and formation of contact sites to the outer membrane. Plays a role in keeping cristae membranes connected to the inner boundary membrane. Also promotes protein import via the mitochondrial intermembrane space assembly (MIA) pathway. Involved in the maintenance of mitochondria morphology. Binds to glycerolipids such as cardiolipin (CL). Contributes to the export of phosphatidylethanolamine (PE) from mitochondria and to the import of galactoglycerolipids from plastids during phosphate (Pi) starvation. Promotes lipid desorption from membranes, likely as an initial step for lipid transfer, and regulates probably the tethering between the inner and outer membranes of mitochondria by binding to TOM40 proteins. The chain is MICOS complex subunit MIC60, mitochondrial from Arabidopsis thaliana (Mouse-ear cress).